The primary structure comprises 246 residues: MTGTISAPLYLLRGLQLIGWRDMQHALDYLYADGALREGTLVAINAEKMLAVEDNPEVRALIEAAEFKYADGISVVRSLRKKYPQAQVSRVAGADLWEALMQRAGAEGTPVFLVGGKPEVLTQTESRLRQRWQVNIVGSQDGYFTPEQRQTLFERIRDSGAKIVTVAMGSPRQEIFMRDCRRLYPHALYMGVGGTYDVFTGHVHRAPKFWQDLGLEWFYRLLLQPSRIKRQFRLLRYLRWHYTGKL.

The protein belongs to the glycosyltransferase 26 family.

The catalysed reaction is UDP-N-acetyl-alpha-D-mannosaminouronate + N-acetyl-alpha-D-glucosaminyl-di-trans,octa-cis-undecaprenyl diphosphate = beta-D-ManNAcA-(1-&gt;4)-alpha-D-GlcNAc-di-trans,octa-cis-undecaprenyl diphosphate + UDP + H(+). It functions in the pathway bacterial outer membrane biogenesis; enterobacterial common antigen biosynthesis. In terms of biological role, catalyzes the synthesis of Und-PP-GlcNAc-ManNAcA (Lipid II), the second lipid-linked intermediate involved in enterobacterial common antigen (ECA) synthesis. This chain is UDP-N-acetyl-D-mannosaminuronic acid transferase, found in Klebsiella pneumoniae (strain 342).